Consider the following 156-residue polypeptide: ATP synthase subunit b (156 aa).

The helical transmembrane segment at 7–29 threads the bilayer; sequence LLGQAISFALFVWFCIKFVWPPL.

The protein belongs to the ATPase B chain family. F-type ATPases have 2 components, F(1) - the catalytic core - and F(0) - the membrane proton channel. F(1) has five subunits: alpha(3), beta(3), gamma(1), delta(1), epsilon(1). F(0) has three main subunits: a(1), b(2) and c(10-14). The alpha and beta chains form an alternating ring which encloses part of the gamma chain. F(1) is attached to F(0) by a central stalk formed by the gamma and epsilon chains, while a peripheral stalk is formed by the delta and b chains.

The protein localises to the cell inner membrane. Functionally, f(1)F(0) ATP synthase produces ATP from ADP in the presence of a proton or sodium gradient. F-type ATPases consist of two structural domains, F(1) containing the extramembraneous catalytic core and F(0) containing the membrane proton channel, linked together by a central stalk and a peripheral stalk. During catalysis, ATP synthesis in the catalytic domain of F(1) is coupled via a rotary mechanism of the central stalk subunits to proton translocation. Component of the F(0) channel, it forms part of the peripheral stalk, linking F(1) to F(0). The sequence is that of ATP synthase subunit b from Shewanella sp. (strain W3-18-1).